The primary structure comprises 377 residues: MSFRAPNLIRSAAGRRASQTLNLRSQVIRRRFATEGGPEITKPSSPRSSNTRYLLAGVGIAAVGAAYYFYGTGRTAHDSANKADTVVRGAVATVEAKTGLRRGKDEYQKVYNRIAETLEKEGYDDGSLAPVLLRLAWHSSGTYNKEDGTGGSNFATMRFKPEAEHSANNGLHVAREHMEKIKQEFPWISYGDLWTLGGVCAVQESGGPTIPWRPGRIDGFEAQVTPDGRLPDASQAQDHLRFIFNRMGFNDQEIVALSGAHAMGRCHTNRSGFEGPWTFSPVTFSNQYFALLRDEPWQWKKWTGPAQYEDKNTKTLMMLPTDMALLKDKSFKKYVDIYADNEEKFFSDFAKAFSKLIELGVPERQWAGEPWTLGTSD.

A mitochondrion-targeting transit peptide spans 1–17 (MSFRAPNLIRSAAGRRA). H138 serves as the catalytic Proton acceptor. Residue H261 participates in heme b binding. The Tryptophan radical intermediate role is filled by W277.

The protein belongs to the peroxidase family. Cytochrome c peroxidase subfamily. Forms a one-to-one complex with cytochrome c. The cofactor is heme b.

The protein resides in the mitochondrion matrix. It is found in the mitochondrion intermembrane space. It catalyses the reaction 2 Fe(II)-[cytochrome c] + H2O2 + 2 H(+) = 2 Fe(III)-[cytochrome c] + 2 H2O. Destroys radicals which are normally produced within the cells and which are toxic to biological systems. The chain is Cytochrome c peroxidase, mitochondrial (CCP1) from Cryptococcus neoformans var. neoformans serotype D (strain JEC21 / ATCC MYA-565) (Filobasidiella neoformans).